A 1052-amino-acid chain; its full sequence is F-box/WD repeat-containing protein 10 (1052 aa).

A WD 1 repeat occupies 169 to 206; the sequence is GLNQDITDVCFSPEKDHSSKSATSQVYWTAKTQHTSLP. In terms of domain architecture, F-box spans 276–323; the sequence is DFIRYLPIHLSKYILRMLDRHTLNKCASVSQHWAAMAQQVKMDLSAHG. 6 WD repeats span residues 409–447, 451–490, 493–532, 534–569, 572–609, and 611–652; these read SDTW…AIPV, GHAG…CTRI, GHQG…KTFR, KDPI…LVKT, GHEG…ERCL, and AFKH…KVLK. Positions 690 to 719 form a coiled coil; that stretch reads YAVEKTKQKKNKEKEEEKEENSLMEILSKC. Positions 766–805 are disordered; that stretch reads LQSQGKSKSPRRDADDVEKAQKQGQLETPGKLPSHPKKKS. Residues 775–786 show a composition bias toward basic and acidic residues; the sequence is PRRDADDVEKAQ. Residues 986 to 1010 adopt a coiled-coil conformation; the sequence is VLLTVKEEKEHQEAKMKEYQAREST.

Probable substrate-recognition component of a SCF (SKP1-CUL1-F-box protein)-type E3 ubiquitin ligase complex which mediates the ubiquitination and subsequent proteasomal degradation of target proteins. Overexpression is leading to degradation of CBX5 and CBX1. The protein is F-box/WD repeat-containing protein 10 (FBXW10) of Homo sapiens (Human).